Consider the following 287-residue polypeptide: X-box-binding protein 1 (287 aa).

One can recognise a bZIP domain in the interval 61-117 (EEKMDRRKLKNRVAAQNARDKKKERSAKIEDVMRDLVEENRRLRAENERLRRQNKNL). The disordered stretch occupies residues 63 to 87 (KMDRRKLKNRVAAQNARDKKKERSA). A basic motif region spans residues 63 to 88 (KMDRRKLKNRVAAQNARDKKKERSAK). Residues 78-87 (ARDKKKERSA) are compositionally biased toward basic and acidic residues. Residues 89-117 (IEDVMRDLVEENRRLRAENERLRRQNKNL) form a leucine-zipper region.

As to quaternary structure, interacts with SUMO-conjugating enzyme ubc-9; the interaction is direct. Sumoylated. Sumoylation may negatively modulate the transcription of genes involved in the ER-stress-response.

Its subcellular location is the nucleus. Required for transcriptional regulation of the unfolded protein response (UPR) in the endoplasmic reticulum (ER) under stressed conditions, acting downstream of ire-1, and also maintaining ER homeostasis via a negative feedback loop, in parallel with ER kinase pek-1. May also regulate Golgi protein trafficking distal to the ER. Protects the host organism from the detrimental effects of mounting an innate immune response to microbes, such as the Gram-negative bacterium P.aeruginosa, probably by modulating the UPR. Functionally, plays a role in the unconventional cytoplasmic splicing processing of its own mRNA triggered by the endoplasmic reticulum (ER) transmembrane endoribonuclease ire-1: upon ER stress, the emerging xbp-1 polypeptide chain, as part of a mRNA-ribosome-nascent chain (R-RNC) complex, cotranslationally recruits its own unprocessed mRNA through transient docking to the ER membrane and translational pausing, therefore facilitating efficient ire-1-mediated xbp-1 mRNA isoform 2 production. Its function is as follows. Functions as a stress-inducible potent transcriptional activator during endoplasmic reticulum (ER) stress by inducing unfolded protein response (UPR) target genes via binding to the UPR element (UPRE). Plays a role in modulation of the UPR, lipid metabolism, proteostasis, and lifespan. In neurons, rescues stress resistance, increases longevity, and, drives expression of lysosomal genes in the intestine and activates the UPR in distal, non-neuronal cell types through a cell-nonautonomous mechanism. In neurons or intestine, plays a role in protection against proteotoxicity, acting via positive modulation of genes involved in lysosomal function, including lipases and the fatty-acid desaturase fat-6. Protection against proteotoxicity in neurons is dependent upon the transcription factor atf-6. This is X-box-binding protein 1 from Caenorhabditis elegans.